The chain runs to 248 residues: mRNA-decapping protein OPG122 (248 aa).

Positions 45–227 (HKRVSVSAIL…IAKYALDTAK (183 aa)) constitute a Nudix hydrolase domain. The Nudix box signature appears at 126–147 (GIPKRGENVPECLSREIKEEVN). Glutamate 132 lines the Mg(2+) pocket. Glutamate 141 (nucleophile) is an active-site residue. Residue glutamate 145 participates in Mn(2+) binding. Aspartate 167 is a Mg(2+) binding site.

Belongs to the Nudix hydrolase family. Mg(2+) serves as cofactor. Requires Mn(2+) as cofactor.

It localises to the host mitochondrion. In terms of biological role, decapping enzyme that remove the protective 5'-cap from both host and viral mRNAs to commit transcripts for decay by the cellular exonuclease XRN1. Preferentially targets spliced mRNAs and since all viral genes are intronless, it preferentially targets host over viral transcripts. Acceleration of the turnover of cellular transcripts promotes the shutoff of host protein synthesis and therefore diminish the magnitude of antiviral response. In Bos taurus (Bovine), this protein is mRNA-decapping protein OPG122 (OPG122).